A 407-amino-acid chain; its full sequence is Phosphopentomutase (407 aa).

6 residues coordinate Mn(2+): aspartate 10, aspartate 306, histidine 311, aspartate 347, histidine 348, and histidine 359.

Belongs to the phosphopentomutase family. The cofactor is Mn(2+).

The protein resides in the cytoplasm. It catalyses the reaction 2-deoxy-alpha-D-ribose 1-phosphate = 2-deoxy-D-ribose 5-phosphate. It carries out the reaction alpha-D-ribose 1-phosphate = D-ribose 5-phosphate. It functions in the pathway carbohydrate degradation; 2-deoxy-D-ribose 1-phosphate degradation; D-glyceraldehyde 3-phosphate and acetaldehyde from 2-deoxy-alpha-D-ribose 1-phosphate: step 1/2. Functionally, isomerase that catalyzes the conversion of deoxy-ribose 1-phosphate (dRib-1-P) and ribose 1-phosphate (Rib-1-P) to deoxy-ribose 5-phosphate (dRib-5-P) and ribose 5-phosphate (Rib-5-P), respectively. The polypeptide is Phosphopentomutase (Shigella boydii serotype 18 (strain CDC 3083-94 / BS512)).